A 480-amino-acid chain; its full sequence is Alpha-glucosidase (480 aa).

4–70 contributes to the NAD(+) binding site; sequence VKIGIIGAGS…ADLKFEKTTS (67 aa). 2 residues coordinate substrate: D119 and N153. C174 serves as a coordination point for Mn(2+). Catalysis depends on H175, which acts as the Proton donor. Mn(2+) is bound at residue H203. Residue D260 is the Proton acceptor of the active site.

Belongs to the glycosyl hydrolase 4 family. As to quaternary structure, homodimer. NAD(+) serves as cofactor. It depends on Mn(2+) as a cofactor.

It carries out the reaction Hydrolysis of terminal, non-reducing (1-&gt;4)-linked alpha-D-glucose residues with release of alpha-D-glucose.. Its activity is regulated as follows. Inhibited by EDTA in vitro. In terms of biological role, is able to hydrolyze diverse types of alpha-glycoside bonds in di- and trisaccharides: alpha-1,4 bonds of maltose and maltotriose, alpha-1,1 bonds of trehalose, alpha-1,2 bonds of sucrose, alpha-1,3 bonds of turanose and melizitose, alpha-1,6 bonds of isomaltose and melibiose. AglA is not specific with respect to the configuration at the C-4 position of its substrates because it also possesses alpha-galactosidase activity. Acts on the substrate from the non-reducing end of the chain. The activity of AglA drops with increasing length of the saccharide chain. Does not hydrolyze alpha-, beta-, and gamma-cyclodextrins or polysaccharides (starch, pullulan, amylose, amylopectin, glycogen). Does not cleave beta-glycosidic bonds in di-, oligo-, or polysaccharides. This Thermotoga neapolitana protein is Alpha-glucosidase (aglA).